The following is a 538-amino-acid chain: Importin subunit alpha-4 (538 aa).

The region spanning 1-58 (MSLRPSTRAELRKKIYKTGVDADEARRRREDNLVEIRKNKREDSLLKKRREGMMLQQQ) is the IBB domain. ARM repeat units follow at residues 112–152 (SPPI…NVAS), 155–194 (SDHT…NVAG), 197–237 (PNCR…NFCR), 239–278 (KPPT…YLSD), 281–320 (NDKI…NIVT), 323–363 (DSQT…NITA), 366–405 (KLQI…NATS), and 409–448 (HEQI…NILK).

The protein belongs to the importin alpha family. As to quaternary structure, forms a complex with importin subunit beta-1. Interacts with A.tumefaciens VirD2 and VirE2.

The protein resides in the nucleus envelope. Its function is as follows. Binds to conventional NLS motifs and mediates nuclear protein import across the nuclear envelope. Acts as a cellular receptor for the nuclear import of the virD2 protein of Agrobacterium and is essential for Agrobacterium-mediated root transformation. The chain is Importin subunit alpha-4 from Arabidopsis thaliana (Mouse-ear cress).